A 149-amino-acid chain; its full sequence is Nucleoside diphosphate kinase (149 aa).

Residues Lys-9, Phe-57, Arg-85, Thr-91, Arg-102, and Asn-112 each contribute to the ATP site. His-115 (pros-phosphohistidine intermediate) is an active-site residue.

Belongs to the NDK family. Homotetramer. Mg(2+) serves as cofactor.

Its subcellular location is the cytoplasm. It catalyses the reaction a 2'-deoxyribonucleoside 5'-diphosphate + ATP = a 2'-deoxyribonucleoside 5'-triphosphate + ADP. The catalysed reaction is a ribonucleoside 5'-diphosphate + ATP = a ribonucleoside 5'-triphosphate + ADP. In terms of biological role, major role in the synthesis of nucleoside triphosphates other than ATP. The ATP gamma phosphate is transferred to the NDP beta phosphate via a ping-pong mechanism, using a phosphorylated active-site intermediate. The sequence is that of Nucleoside diphosphate kinase from Thermomicrobium roseum (strain ATCC 27502 / DSM 5159 / P-2).